The chain runs to 212 residues: Urease accessory protein UreG (212 aa).

11-18 (GPVGSGKT) lines the GTP pocket.

It belongs to the SIMIBI class G3E GTPase family. UreG subfamily. As to quaternary structure, homodimer. UreD, UreF and UreG form a complex that acts as a GTP-hydrolysis-dependent molecular chaperone, activating the urease apoprotein by helping to assemble the nickel containing metallocenter of UreC. The UreE protein probably delivers the nickel.

The protein localises to the cytoplasm. In terms of biological role, facilitates the functional incorporation of the urease nickel metallocenter. This process requires GTP hydrolysis, probably effectuated by UreG. This chain is Urease accessory protein UreG, found in Trichodesmium erythraeum (strain IMS101).